A 344-amino-acid polypeptide reads, in one-letter code: Dihydroorotate dehydrogenase (quinone) (344 aa).

FMN contacts are provided by residues Ala-65 to Lys-69 and Thr-89. Lys-69 provides a ligand contact to substrate. Asn-114–Phe-118 is a substrate binding site. FMN-binding residues include Asn-145 and Asn-178. Substrate is bound at residue Asn-178. The active-site Nucleophile is Ser-181. Asn-183 provides a ligand contact to substrate. Positions 215 and 243 each coordinate FMN. A substrate-binding site is contributed by Asn-244 to Thr-245. FMN contacts are provided by residues Gly-269, Gly-298, and Tyr-319–Thr-320.

The protein belongs to the dihydroorotate dehydrogenase family. Type 2 subfamily. In terms of assembly, monomer. FMN is required as a cofactor.

The protein localises to the cell membrane. It catalyses the reaction (S)-dihydroorotate + a quinone = orotate + a quinol. It participates in pyrimidine metabolism; UMP biosynthesis via de novo pathway; orotate from (S)-dihydroorotate (quinone route): step 1/1. Functionally, catalyzes the conversion of dihydroorotate to orotate with quinone as electron acceptor. The chain is Dihydroorotate dehydrogenase (quinone) from Clavibacter michiganensis subsp. michiganensis (strain NCPPB 382).